The primary structure comprises 555 residues: Undecaprenyl phosphate-alpha-4-amino-4-deoxy-L-arabinose arabinosyl transferase (555 aa).

A run of 11 helical transmembrane segments spans residues 6–26 (GSWA…PLNG), 87–107 (FGSV…AMLM), 116–136 (LATL…YSVL), 178–198 (FMTK…PIVI), 206–226 (LLIY…PWAL), 257–277 (APFW…LALL), 293–313 (ELFF…IAKG), 315–335 (LPTY…AYAE), 351–371 (VLNG…GSGL), 384–404 (PKIV…VVSV), and 411–431 (WSWA…AIPQ).

Belongs to the glycosyltransferase 83 family.

The protein localises to the cell inner membrane. It catalyses the reaction 4-amino-4-deoxy-alpha-L-arabinopyranosyl di-trans,octa-cis-undecaprenyl phosphate + lipid IVA = lipid IIA + di-trans,octa-cis-undecaprenyl phosphate.. The protein operates within lipopolysaccharide metabolism; 4-amino-4-deoxy-beta-L-arabinose-lipid A biosynthesis. Functionally, catalyzes the transfer of the L-Ara4N moiety of the glycolipid undecaprenyl phosphate-alpha-L-Ara4N to lipid A. The modified arabinose is attached to lipid A and is required for resistance to polymyxin and cationic antimicrobial peptides. In Serratia proteamaculans (strain 568), this protein is Undecaprenyl phosphate-alpha-4-amino-4-deoxy-L-arabinose arabinosyl transferase.